Consider the following 587-residue polypeptide: Solute carrier family 13 member 2 (587 aa).

Transmembrane regions (helical) follow at residues 13-33 (FYLIVLCLPIFLLPLPLIVQT), 53-73 (ALPLAVTALFPIVLFPLMGIM), 86-106 (TNILFVGGLMVAIAVEHWNLH), and 136-156 (SMWISNTATTAMMVPIGHAVL). Positions 188-208 (KLDNGQPVSAPSEPRTQKTQE) are disordered. 8 consecutive transmembrane segments (helical) span residues 264-284 (FAFPTMIILLLLAWLWLQVLF), 329-349 (VLFVLLVVLWFTREPGFFPGW), 367-387 (TVAIFISLVMFIIPSKIPGLM), 407-427 (TVNDKMPWNIVILLGGGFALA), 445-465 (PLQHIPPSATAVILCLLIAIF), 477-497 (LFLPILASMAQAICLHPLYVM), 506-526 (LAFMLPVATPPNAIVFSFGGL), and 535-555 (GFLLNIIGVLAITLSINSWSI).

Belongs to the SLC13A/DASS transporter (TC 2.A.47) family. NADC subfamily. Expressed in large and small intestine and in the kidney proximal tubules.

The protein localises to the apical cell membrane. The enzyme catalyses succinate(out) + 3 Na(+)(out) = succinate(in) + 3 Na(+)(in). The catalysed reaction is fumarate(out) + 3 Na(+)(out) = fumarate(in) + 3 Na(+)(in). It catalyses the reaction 2-oxoglutarate(out) + 3 Na(+)(out) = 2-oxoglutarate(in) + 3 Na(+)(in). Li(+) decreases succinate transport in the presence of Na(+), by competing at one of the three cation binding sites. Its function is as follows. Low-affinity sodium-dicarboxylate cotransporter, that mediates the entry of citric acid cycle intermediates, such as succinate, citrate, fumarate and alpha-ketoglutarate (2-oxoglutarate) into the small intestine and renal proximal tubule. Transports the dicarboxylate into the cell with a probable stoichiometry of 3 Na(+) for 1 divalent dicarboxylate, rendering the process electrogenic. Citrate is transported in protonated form as a divalent anion, rather than the trivalent form which is normally found in blood. Has a critical role in renal dicarboxylate transport. The protein is Solute carrier family 13 member 2 (Slc13a2) of Rattus norvegicus (Rat).